The primary structure comprises 168 residues: ATP synthase subunit b (168 aa).

A helical membrane pass occupies residues 13 to 33 (WTFLFQTLNLLVVMGLLYVFL).

The protein belongs to the ATPase B chain family. In terms of assembly, F-type ATPases have 2 components, F(1) - the catalytic core - and F(0) - the membrane proton channel. F(1) has five subunits: alpha(3), beta(3), gamma(1), delta(1), epsilon(1). F(0) has three main subunits: a(1), b(2) and c(10-14). The alpha and beta chains form an alternating ring which encloses part of the gamma chain. F(1) is attached to F(0) by a central stalk formed by the gamma and epsilon chains, while a peripheral stalk is formed by the delta and b chains.

It is found in the cell membrane. Functionally, f(1)F(0) ATP synthase produces ATP from ADP in the presence of a proton or sodium gradient. F-type ATPases consist of two structural domains, F(1) containing the extramembraneous catalytic core and F(0) containing the membrane proton channel, linked together by a central stalk and a peripheral stalk. During catalysis, ATP synthesis in the catalytic domain of F(1) is coupled via a rotary mechanism of the central stalk subunits to proton translocation. Component of the F(0) channel, it forms part of the peripheral stalk, linking F(1) to F(0). The sequence is that of ATP synthase subunit b from Moorella thermoacetica (strain ATCC 39073 / JCM 9320).